Reading from the N-terminus, the 365-residue chain is Cobalt-precorrin-5B C(1)-methyltransferase (365 aa).

This sequence belongs to the CbiD family.

The catalysed reaction is Co-precorrin-5B + S-adenosyl-L-methionine = Co-precorrin-6A + S-adenosyl-L-homocysteine. Its pathway is cofactor biosynthesis; adenosylcobalamin biosynthesis; cob(II)yrinate a,c-diamide from sirohydrochlorin (anaerobic route): step 6/10. In terms of biological role, catalyzes the methylation of C-1 in cobalt-precorrin-5B to form cobalt-precorrin-6A. The chain is Cobalt-precorrin-5B C(1)-methyltransferase from Polaromonas naphthalenivorans (strain CJ2).